We begin with the raw amino-acid sequence, 185 residues long: Capsid protein (185 aa).

A disordered region spans residues Asn-136–Cys-185. Basic residues predominate over residues Val-149 to Ser-178. 3 positions are modified to phosphoserine; by host: Ser-157, Ser-164, and Ser-172. The stretch at Ser-157 to Pro-163 is one 1; half-length repeat. The segment at Ser-157–Gln-179 is 3 X 8 AA repeats of S-P-R-R-R-[PR]-S-Q. Residues Arg-160 to Arg-177 carry the Bipartite nuclear localization signal motif. 2 repeat units span residues Ser-164–Gln-171 and Ser-172–Gln-179. The interval Gln-179 to Cys-185 is RNA binding.

It belongs to the orthohepadnavirus core antigen family. Homodimerizes, then multimerizes. Interacts with cytosol exposed regions of viral L glycoprotein present in the reticulum-to-Golgi compartment. Interacts with human FLNB. Phosphorylated form interacts with host importin alpha; this interaction depends on the exposure of the NLS, which itself depends upon genome maturation and/or phosphorylation of the capsid protein. Interacts with host NUP153. In terms of processing, phosphorylated by host SRPK1, SRPK2, and maybe protein kinase C or GAPDH. Phosphorylation is critical for pregenomic RNA packaging. Protein kinase C phosphorylation is stimulated by HBx protein and may play a role in transport of the viral genome to the nucleus at the late step during the viral replication cycle.

It is found in the virion. The protein resides in the host cytoplasm. Its function is as follows. Self assembles to form an icosahedral capsid. Most capsids appear to be large particles with an icosahedral symmetry of T=4 and consist of 240 copies of capsid protein, though a fraction forms smaller T=3 particles consisting of 180 capsid proteins. Entering capsids are transported along microtubules to the nucleus. Phosphorylation of the capsid is thought to induce exposure of nuclear localization signal in the C-terminal portion of the capsid protein that allows binding to the nuclear pore complex via the importin (karyopherin-) alpha and beta. Capsids are imported in intact form through the nuclear pore into the nuclear basket, where it probably binds NUP153. Only capsids that contain the mature viral genome can release the viral DNA and capsid protein into the nucleoplasm. Immature capsids get stuck in the basket. Capsids encapsulate the pre-genomic RNA and the P protein. Pre-genomic RNA is reverse-transcribed into DNA while the capsid is still in the cytoplasm. The capsid can then either be directed to the nucleus, providing more genomes for transcription, or bud through the endoplasmic reticulum to provide new virions. In Hepatitis B virus genotype A1 subtype adw (isolate Philippines/pFDW294/1988) (HBV-A), this protein is Capsid protein.